We begin with the raw amino-acid sequence, 974 residues long: Probable proton ATPase 1B (974 aa).

A compositionally biased stretch (basic and acidic residues) spans 1–23; the sequence is MSSKKYELDAAAFEDKPESHSDA. The disordered stretch occupies residues 1-61; that stretch reads MSSKKYELDA…ATDLLPPSKG (61 aa). A run of 4 helical transmembrane segments spans residues 93–112, 118–137, 265–286, and 295–321; these read GLWG…EFAL, GAIL…YETI, VMLA…YLLA, and ALQF…TLAV. Asp-351 (4-aspartylphosphate intermediate) is an active-site residue. Helical transmembrane passes span 631 to 651, 662 to 684, 698 to 712, 738 to 761, 813 to 840, and 869 to 887; these read AAAD…AMLV, FLTY…CFSL, FFHL…ITLL, VVFV…LWIG, FFFY…AASF, and VWIY…KVLA. Residues 952-974 are disordered; sequence REDTHVLNESTSPVNAFSPKVKK.

The protein belongs to the cation transport ATPase (P-type) (TC 3.A.3) family. Type IIIA subfamily.

Its subcellular location is the membrane. It catalyses the reaction ATP + H2O + H(+)(in) = ADP + phosphate + 2 H(+)(out). The protein is Probable proton ATPase 1B (H1B) of Leishmania donovani.